Consider the following 84-residue polypeptide: Cell division topological specificity factor (84 aa).

Belongs to the MinE family.

Its function is as follows. Prevents the cell division inhibition by proteins MinC and MinD at internal division sites while permitting inhibition at polar sites. This ensures cell division at the proper site by restricting the formation of a division septum at the midpoint of the long axis of the cell. The sequence is that of Cell division topological specificity factor from Burkholderia cenocepacia (strain HI2424).